The primary structure comprises 138 residues: MRTLWIMAVLLVGVEGDLWQFGQMILKETGKLPFPYYTTYGCYCGWGGQGQPKDATDRCCFVHDCCYGKLTNCKPKTDRYSYSRENGVIICGEGTPCEKQICECDKAAAVCFRENLRTYKKRYMAYPDVLCKKPAEKC.

Residues 1–16 form the signal peptide; the sequence is MRTLWIMAVLLVGVEG. 7 disulfides stabilise this stretch: Cys-42-Cys-131, Cys-44-Cys-60, Cys-59-Cys-111, Cys-65-Cys-138, Cys-66-Cys-104, Cys-73-Cys-97, and Cys-91-Cys-102. The tract at residues 121-133 is important for membrane-damaging activities in eukaryotes and bacteria; heparin-binding; that stretch reads KRYMAYPDVLCKK.

The protein belongs to the phospholipase A2 family. Group II subfamily. D49 sub-subfamily. As to quaternary structure, homodimer; non-covalently linked (probable alternative/compact dimer conformation). In terms of tissue distribution, expressed by the venom gland.

It localises to the secreted. Functionally, snake venom phospholipase A2 (PLA2) that shows low enzymatic activity even tough it conserves the catalytic residues. Shows a strong myotoxic activity and induces indirect hemolysis, anticoagulant properties, and cytotoxic activities. In vivo, it induces muscle necrosis, accompanied by polymorphonuclear cell infiltration, and edema in the mouse paw. It exerts its function even in the absence of extracellular calcium, indicating it is not a calcium-dependent enzyme. A model of myotoxic mechanism has been proposed: an apo Lys49-PLA2 is activated by the entrance of a hydrophobic molecule (e.g. fatty acid) at the hydrophobic channel of the protein leading to a reorientation of a monomer. This reorientation causes a transition between 'inactive' to 'active' states, causing alignment of C-terminal and membrane-docking sites (MDoS) side-by-side and putting the membrane-disruption sites (MDiS) in the same plane, exposed to solvent and in a symmetric position for both monomers. The MDoS region stabilizes the toxin on membrane by the interaction of charged residues with phospholipid head groups. Subsequently, the MDiS region destabilizes the membrane with penetration of hydrophobic residues. This insertion causes a disorganization of the membrane, allowing an uncontrolled influx of ions (i.e. calcium and sodium), and eventually triggering irreversible intracellular alterations and cell death. This chain is Basic phospholipase A2 homolog bothropstoxin-II, found in Bothrops jararacussu (Jararacussu).